We begin with the raw amino-acid sequence, 1058 residues long: Carbamoyl phosphate synthase large chain (1058 aa).

The tract at residues 1-401 is carboxyphosphate synthetic domain; the sequence is MPKRTDIQKI…SLLKACRSLE (401 aa). ATP is bound by residues Arg-129, Arg-169, Gly-175, Gly-176, Arg-208, Ile-210, Glu-215, Gly-241, Ile-242, His-243, Gln-284, and Glu-298. In terms of domain architecture, ATP-grasp 1 spans 133–327; sequence KQLMEELEQP…IAKLAAKIAV (195 aa). Mg(2+) is bound by residues Gln-284, Glu-298, and Asn-300. Mn(2+) is bound by residues Gln-284, Glu-298, and Asn-300. The oligomerization domain stretch occupies residues 402–546; it reads IGVHHNEIPE…YSTYGWENES (145 aa). The tract at residues 547–929 is carbamoyl phosphate synthetic domain; the sequence is IKSDKESVLV…ALYKAFEASY (383 aa). The 191-residue stretch at 671–861 folds into the ATP-grasp 2 domain; the sequence is EQALKELDIP…MAQVATKLIL (191 aa). Residues Arg-707, Ser-746, Ile-748, Glu-752, Gly-777, Val-778, His-779, Ser-780, Gln-820, and Glu-832 each coordinate ATP. Mg(2+)-binding residues include Gln-820, Glu-832, and Asn-834. Mn(2+)-binding residues include Gln-820, Glu-832, and Asn-834. Residues 930–1058 form the MGS-like domain; sequence LHLPTFGNVV…ESRSFVTEAI (129 aa). The allosteric domain stretch occupies residues 930–1058; sequence LHLPTFGNVV…ESRSFVTEAI (129 aa).

It belongs to the CarB family. As to quaternary structure, composed of two chains; the small (or glutamine) chain promotes the hydrolysis of glutamine to ammonia, which is used by the large (or ammonia) chain to synthesize carbamoyl phosphate. Tetramer of heterodimers (alpha,beta)4. Mg(2+) serves as cofactor. Requires Mn(2+) as cofactor.

The catalysed reaction is hydrogencarbonate + L-glutamine + 2 ATP + H2O = carbamoyl phosphate + L-glutamate + 2 ADP + phosphate + 2 H(+). The enzyme catalyses hydrogencarbonate + NH4(+) + 2 ATP = carbamoyl phosphate + 2 ADP + phosphate + 2 H(+). It functions in the pathway amino-acid biosynthesis; L-arginine biosynthesis; carbamoyl phosphate from bicarbonate: step 1/1. The protein operates within pyrimidine metabolism; UMP biosynthesis via de novo pathway; (S)-dihydroorotate from bicarbonate: step 1/3. Large subunit of the glutamine-dependent carbamoyl phosphate synthetase (CPSase). CPSase catalyzes the formation of carbamoyl phosphate from the ammonia moiety of glutamine, carbonate, and phosphate donated by ATP, constituting the first step of 2 biosynthetic pathways, one leading to arginine and/or urea and the other to pyrimidine nucleotides. The large subunit (synthetase) binds the substrates ammonia (free or transferred from glutamine from the small subunit), hydrogencarbonate and ATP and carries out an ATP-coupled ligase reaction, activating hydrogencarbonate by forming carboxy phosphate which reacts with ammonia to form carbamoyl phosphate. In Streptococcus pneumoniae (strain ATCC 700669 / Spain 23F-1), this protein is Carbamoyl phosphate synthase large chain.